A 211-amino-acid chain; its full sequence is MDVILLERVAKLGQMGEVVSVKEGYARNFLLPQKKALRANEMNLAAFENQKAQLEATNLETRKEAEAMGEKLAGQQFVIIRSASDSGALYGSVTIRDAAEAATAEGFTVDRKQVALIAPIKDLGIHTVMVILHPEVEVEIELNVARSPEEAELQASGKSIQDLAAEEEAQAEFEIAELFDDIGAAGMDDDDDDAPAPAQADPSSEESSEED.

The disordered stretch occupies residues 180-211 (DDIGAAGMDDDDDDAPAPAQADPSSEESSEED).

Belongs to the bacterial ribosomal protein bL9 family.

In terms of biological role, binds to the 23S rRNA. The protein is Large ribosomal subunit protein bL9 of Jannaschia sp. (strain CCS1).